A 299-amino-acid polypeptide reads, in one-letter code: tRNA dimethylallyltransferase (299 aa).

G11 to T18 contacts ATP. T13–T18 contributes to the substrate binding site. The segment at D36–Q39 is interaction with substrate tRNA.

It belongs to the IPP transferase family. Monomer. Mg(2+) is required as a cofactor.

It carries out the reaction adenosine(37) in tRNA + dimethylallyl diphosphate = N(6)-dimethylallyladenosine(37) in tRNA + diphosphate. Catalyzes the transfer of a dimethylallyl group onto the adenine at position 37 in tRNAs that read codons beginning with uridine, leading to the formation of N6-(dimethylallyl)adenosine (i(6)A). In Streptococcus pyogenes serotype M4 (strain MGAS10750), this protein is tRNA dimethylallyltransferase.